The primary structure comprises 598 residues: NADH-quinone oxidoreductase subunit C/D (598 aa).

Residues 1–189 (MTDLTTSDSL…DPYVLTKQKE (189 aa)) form an NADH dehydrogenase I subunit C region. The segment at 213–598 (DFMFLNLGPN…IDFVMSDVDR (386 aa)) is NADH dehydrogenase I subunit D.

The protein in the N-terminal section; belongs to the complex I 30 kDa subunit family. It in the C-terminal section; belongs to the complex I 49 kDa subunit family. In terms of assembly, NDH-1 is composed of 13 different subunits. Subunits NuoB, CD, E, F, and G constitute the peripheral sector of the complex.

The protein localises to the cell inner membrane. It carries out the reaction a quinone + NADH + 5 H(+)(in) = a quinol + NAD(+) + 4 H(+)(out). In terms of biological role, NDH-1 shuttles electrons from NADH, via FMN and iron-sulfur (Fe-S) centers, to quinones in the respiratory chain. The immediate electron acceptor for the enzyme in this species is believed to be ubiquinone. Couples the redox reaction to proton translocation (for every two electrons transferred, four hydrogen ions are translocated across the cytoplasmic membrane), and thus conserves the redox energy in a proton gradient. The sequence is that of NADH-quinone oxidoreductase subunit C/D from Yersinia pestis bv. Antiqua (strain Angola).